A 519-amino-acid polypeptide reads, in one-letter code: Cytochrome P450 4A11 (519 aa).

Positions Met-1 to Ser-4 are excised as a propeptide. Glu-321 serves as a coordination point for heme. Phosphoserine is present on Ser-440. Cys-457 is a binding site for heme.

Belongs to the cytochrome P450 family. Requires heme as cofactor. As to expression, expressed in liver. Expressed in S2 and S3 segments of proximal tubules in cortex and outer medulla of kidney.

It localises to the endoplasmic reticulum membrane. The protein resides in the microsome membrane. It carries out the reaction an organic molecule + reduced [NADPH--hemoprotein reductase] + O2 = an alcohol + oxidized [NADPH--hemoprotein reductase] + H2O + H(+). The enzyme catalyses an omega-methyl-long-chain fatty acid + reduced [NADPH--hemoprotein reductase] + O2 = an omega-hydroxy-long-chain fatty acid + oxidized [NADPH--hemoprotein reductase] + H2O + H(+). The catalysed reaction is dodecanoate + reduced [NADPH--hemoprotein reductase] + O2 = 12-hydroxydodecanoate + oxidized [NADPH--hemoprotein reductase] + H2O + H(+). It catalyses the reaction tetradecanoate + reduced [NADPH--hemoprotein reductase] + O2 = 14-hydroxytetradecanoate + oxidized [NADPH--hemoprotein reductase] + H2O + H(+). It carries out the reaction hexadecanoate + reduced [NADPH--hemoprotein reductase] + O2 = 16-hydroxyhexadecanoate + oxidized [NADPH--hemoprotein reductase] + H2O + H(+). The enzyme catalyses (9Z)-octadecenoate + reduced [NADPH--hemoprotein reductase] + O2 = 18-hydroxy-(9Z)-octadecenoate + oxidized [NADPH--hemoprotein reductase] + H2O + H(+). The catalysed reaction is (5Z,8Z,11Z,14Z)-eicosatetraenoate + reduced [NADPH--hemoprotein reductase] + O2 = 20-hydroxy-(5Z,8Z,11Z,14Z)-eicosatetraenoate + oxidized [NADPH--hemoprotein reductase] + H2O + H(+). It catalyses the reaction 22-hydroxydocosanoate + reduced [NADPH--hemoprotein reductase] + O2 = 22-oxodocosanoate + oxidized [NADPH--hemoprotein reductase] + 2 H2O + H(+). It carries out the reaction 22-oxodocosanoate + reduced [NADPH--hemoprotein reductase] + O2 = docosanedioate + oxidized [NADPH--hemoprotein reductase] + H2O + 2 H(+). The enzyme catalyses (9R,10S)-epoxy-octadecanoate + reduced [NADPH--hemoprotein reductase] + O2 = 18-hydroxy-(9R,10S)-epoxy-octadecanoate + oxidized [NADPH--hemoprotein reductase] + H2O + H(+). The catalysed reaction is 3-hydroxyhexadecanoate + reduced [NADPH--hemoprotein reductase] + O2 = 3,16-dihydroxyhexadecanoate + oxidized [NADPH--hemoprotein reductase] + H2O + H(+). It functions in the pathway lipid metabolism; arachidonate metabolism. Its pathway is lipid metabolism; oxylipin biosynthesis. Its activity is regulated as follows. Activated by cytochrome b5. A cytochrome P450 monooxygenase involved in the metabolism of fatty acids and their oxygenated derivatives (oxylipins). Mechanistically, uses molecular oxygen inserting one oxygen atom into a substrate, and reducing the second into a water molecule, with two electrons provided by NADPH via cytochrome P450 reductase (CPR; NADPH-ferrihemoprotein reductase). Catalyzes predominantly the oxidation of the terminal carbon (omega-oxidation) of saturated and unsaturated fatty acids, the catalytic efficiency decreasing in the following order: dodecanoic &gt; tetradecanoic &gt; (9Z)-octadecenoic &gt; (9Z,12Z)-octadecadienoic &gt; hexadecanoic acid. Acts as a major omega-hydroxylase for dodecanoic (lauric) acid in liver. Participates in omega-hydroxylation of (5Z,8Z,11Z,14Z)-eicosatetraenoic acid (arachidonate) to 20-hydroxyeicosatetraenoic acid (20-HETE), a signaling molecule acting both as vasoconstrictive and natriuretic with overall effect on arterial blood pressure. Can also catalyze the oxidation of the penultimate carbon (omega-1 oxidation) of fatty acids with lower efficiency. May contribute to the degradation of saturated very long-chain fatty acids (VLCFAs) such as docosanoic acid, by catalyzing successive omega-oxidations to the corresponding dicarboxylic acid, thereby initiating chain shortening. Omega-hydroxylates (9R,10S)-epoxy-octadecanoate stereoisomer. Plays a minor role in omega-oxidation of long-chain 3-hydroxy fatty acids. Has little activity toward prostaglandins A1 and E1. In Homo sapiens (Human), this protein is Cytochrome P450 4A11.